The sequence spans 3131 residues: Intermembrane lipid transfer protein vps1302 (3131 aa).

In terms of domain architecture, Chorein N-terminal spans 2-115; the sequence is LEGLLANFLN…VLESKRRQMQ (114 aa). Basic and acidic residues predominate over residues 774 to 801; it reads DGKASDDDDNGDWRPESSESLDSHESEY. Residues 774-807 are disordered; the sequence is DGKASDDDDNGDWRPESSESLDSHESEYKLNNTP. The SHR-BD domain maps to 2085 to 2363; that stretch reads KVMIYPPYVI…NYSWDFPILK (279 aa).

This sequence belongs to the VPS13 family.

The protein resides in the golgi apparatus. It is found in the trans-Golgi network. Mediates the transfer of lipids between membranes at organelle contact sites. May play a role in mitochondrial lipid homeostasis, Golgi vesicle transport, reticulophagy, actin cytoskeleton organization and formation of the forespore membrane. The polypeptide is Intermembrane lipid transfer protein vps1302 (Schizosaccharomyces pombe (strain 972 / ATCC 24843) (Fission yeast)).